Here is a 366-residue protein sequence, read N- to C-terminus: Beta sliding clamp (366 aa).

This sequence belongs to the beta sliding clamp family. In terms of assembly, forms a ring-shaped head-to-tail homodimer around DNA which binds and tethers DNA polymerases and other proteins to the DNA. The DNA replisome complex has a single clamp-loading complex (3 tau and 1 each of delta, delta', psi and chi subunits) which binds 3 Pol III cores (1 core on the leading strand and 2 on the lagging strand) each with a beta sliding clamp dimer. Additional proteins in the replisome are other copies of gamma, psi and chi, Ssb, DNA helicase and RNA primase.

Its subcellular location is the cytoplasm. Confers DNA tethering and processivity to DNA polymerases and other proteins. Acts as a clamp, forming a ring around DNA (a reaction catalyzed by the clamp-loading complex) which diffuses in an ATP-independent manner freely and bidirectionally along dsDNA. Initially characterized for its ability to contact the catalytic subunit of DNA polymerase III (Pol III), a complex, multichain enzyme responsible for most of the replicative synthesis in bacteria; Pol III exhibits 3'-5' exonuclease proofreading activity. The beta chain is required for initiation of replication as well as for processivity of DNA replication. This is Beta sliding clamp (dnaN) from Haemophilus influenzae (strain ATCC 51907 / DSM 11121 / KW20 / Rd).